The sequence spans 160 residues: Cyclic di-GMP-binding protein Smlt4090 (160 aa).

Residues Lys33, Lys132, Arg134, Asp135, and Asp160 each coordinate 3',3'-c-di-GMP.

It belongs to the YajQ family.

Its function is as follows. Cyclic di-GMP effector that significantly contributes to virulence. Binds bis-(3',5')-cyclic diguanylate (cyclic di-GMP or c-di-GMP), an important bacterial second messenger that controls a wide range of cellular processes. The protein is Cyclic di-GMP-binding protein Smlt4090 of Stenotrophomonas maltophilia (strain K279a).